Consider the following 248-residue polypeptide: Chromatin target of PRMT1 protein (248 aa).

Residue Ala-2 is modified to N-acetylalanine. The residue at position 33 (Thr-33) is a Phosphothreonine. Residues Ser-40, Ser-49, and Ser-64 each carry the phosphoserine modification. Lys-70 participates in a covalent cross-link: Glycyl lysine isopeptide (Lys-Gly) (interchain with G-Cter in SUMO2). The interval 151 to 204 is disordered; sequence LRRGGVRGRGGPGRGGLGRGAMGRGGIGGRGRGMIGRGRGGFGGRGRGRGRGRG. Residues 153–206 form an interaction with PRMT1 region; the sequence is RGGVRGRGGPGRGGLGRGAMGRGGIGGRGRGMIGRGRGGFGGRGRGRGRGRGAL. Residues 157-195 show a composition bias toward gly residues; that stretch reads RGRGGPGRGGLGRGAMGRGGIGGRGRGMIGRGRGGFGGR. Residues 194–203 carry the GAR motif; involved in 5hmC binding motif; sequence GRGRGRGRGR. Thr-242 is subject to Phosphothreonine.

Interacts with PRMT1 and PRMT5. Interacts with the 5FMC complex; the interaction is methylation-dependent. Interacts with FYTTD1, SET and PRC1 complex members CBX4, RNF2 and PHC2; the interactions are methylation-independent. Interacts with ZNF148. Component of the transcription/export (TREX) complex at least composed of ALYREF/THOC4, DDX39B, SARNP/CIP29, CHTOP and the THO subcomplex; TREX seems to have dynamic structure involving ATP-dependent remodeling; in the complex interacts (methylated) with ALYREF/THOC4 and with DDX39B in a methylation-independent manner. Interacts (methylated) with NXF1; the interaction is mutually exclusive with the NXF1:THOC5 interaction. Interacts with WDR77 and ERH. In terms of processing, asymmetrically methylated by PRMT1. Symmetrically methylated by PRMT5. In terms of tissue distribution, expressed in an erythroid progenitor cell line derived from peripheral blood. Expressed in glioblastoma cells.

The protein localises to the nucleus. It is found in the nucleolus. Its subcellular location is the nucleoplasm. The protein resides in the nucleus speckle. Functionally, plays an important role in the ligand-dependent activation of estrogen receptor target genes. May play a role in the silencing of fetal globin genes. Recruits the 5FMC complex to ZNF148, leading to desumoylation of ZNF148 and subsequent transactivation of ZNF148 target genes. Plays an important role in the tumorigenicity of glioblastoma cells. Binds to 5-hydroxymethylcytosine (5hmC) and associates with the methylosome complex containing PRMT1, PRMT5, MEP50 and ERH. The CHTOP-methylosome complex associated with 5hmC is recruited to selective sites on the chromosome, where it methylates H4R3 and activates the transcription of genes involved in glioblastomagenesis. Required for effective mRNA nuclear export and is a component of the TREX complex which is thought to couple mRNA transcription, processing and nuclear export, and specifically associates with spliced mRNA and not with unspliced pre-mRNA. TREX is recruited to spliced mRNAs by a transcription-independent mechanism, binds to mRNA upstream of the exon-junction complex (EJC) and is recruited in a splicing- and cap-dependent manner to a region near the 5' end of the mRNA where it functions in mRNA export to the cytoplasm via the TAP/NFX1 pathway. The TREX complex is essential for the export of Kaposi's sarcoma-associated herpesvirus (KSHV) intronless mRNAs and infectious virus production. Stimulates DDX39B ATPase and helicase activities. In cooperation with ALYREF/THOC4 enhances NXF1 RNA binding activity. The protein is Chromatin target of PRMT1 protein (CHTOP) of Homo sapiens (Human).